We begin with the raw amino-acid sequence, 168 residues long: Photosystem I assembly protein Ycf3 (168 aa).

TPR repeat units lie at residues 35-68, 72-105, and 120-153; these read AFTY…EIDP, SYIL…NPFL, and GEQA…TPGN.

Belongs to the Ycf3 family.

The protein localises to the plastid. It localises to the chloroplast thylakoid membrane. Its function is as follows. Essential for the assembly of the photosystem I (PSI) complex. May act as a chaperone-like factor to guide the assembly of the PSI subunits. In Drimys granadensis, this protein is Photosystem I assembly protein Ycf3.